The following is a 42-amino-acid chain: Omega-theraphotoxin-Asp3a (42 aa).

Intrachain disulfides connect cysteine 1-cysteine 16, cysteine 8-cysteine 21, and cysteine 15-cysteine 30.

The protein belongs to the neurotoxin 14 (magi-1) family. 08 (Ltx-4) subfamily. In terms of tissue distribution, expressed by the venom gland.

It localises to the secreted. Functionally, inhibits voltage-gated calcium channels (Cav) in rat cerebellar granule cells. This is Omega-theraphotoxin-Asp3a from Aphonopelma sp. (American tarantula).